Consider the following 725-residue polypeptide: Homeobox-leucine zipper protein HDG3 (725 aa).

Residues 1-74 (MSQSNMVPVA…PRHKKKKYNR (74 aa)) are disordered. A compositionally biased stretch (low complexity) spans 11-40 (NNGDNNNDNENNNNNNNNGGTDNTNAGNDS). Residues 46 to 64 (DSGNTSSGNHGEGLGNNQA) show a composition bias toward polar residues. The span at 65–74 (PRHKKKKYNR) shows a compositional bias: basic residues. Residues 68–127 (KKKKYNRHTQLQISEMEAFFRECPHPDDKQRYDLSAQLGLDPVQIKFWFQNKRTQNKNQQ) constitute a DNA-binding region (homeobox). Residues 117–201 (QNKRTQNKNQ…SVTAEKISRL (85 aa)) adopt a coiled-coil conformation. One can recognise an START domain in the interval 243–475 (DANTKPIIME…LVRQCERISS (233 aa)).

The protein belongs to the HD-ZIP homeobox family. Class IV subfamily. Interacts with AIL7/PLT7, ANT, BBM and AIL1. Expressed in siliques.

The protein resides in the nucleus. In terms of biological role, probable transcription factor. Seems to promote cell differentiation. This chain is Homeobox-leucine zipper protein HDG3, found in Arabidopsis thaliana (Mouse-ear cress).